Reading from the N-terminus, the 431-residue chain is Peptidase B (431 aa).

Lys-196 and Asp-201 together coordinate Mn(2+). Lys-208 is a catalytic residue. Mn(2+) contacts are provided by Asp-219, Asp-278, and Glu-280. Arg-282 is an active-site residue.

Belongs to the peptidase M17 family. Homohexamer. The cofactor is Mn(2+).

It localises to the cytoplasm. The enzyme catalyses Release of an N-terminal amino acid, Xaa, from a peptide or arylamide. Xaa is preferably Glu or Asp but may be other amino acids, including Leu, Met, His, Cys and Gln.. Probably plays an important role in intracellular peptide degradation. This Vibrio atlanticus (strain LGP32) (Vibrio splendidus (strain Mel32)) protein is Peptidase B.